The primary structure comprises 446 residues: tRNA modification GTPase MnmE (446 aa).

(6S)-5-formyl-5,6,7,8-tetrahydrofolate contacts are provided by Arg28, Glu85, and Lys124. One can recognise a TrmE-type G domain in the interval 220 to 372 (GLTVVLVGQP…LRAKLLQAAG (153 aa)). Asn230 is a binding site for K(+). Residues 230–235 (NVGKSS), 249–255 (TEIAGTT), and 274–277 (DTAG) contribute to the GTP site. Ser234 lines the Mg(2+) pocket. K(+) is bound by residues Thr249, Ile251, and Thr254. Thr255 contributes to the Mg(2+) binding site. A (6S)-5-formyl-5,6,7,8-tetrahydrofolate-binding site is contributed by Lys446.

It belongs to the TRAFAC class TrmE-Era-EngA-EngB-Septin-like GTPase superfamily. TrmE GTPase family. Homodimer. Heterotetramer of two MnmE and two MnmG subunits. K(+) is required as a cofactor.

The protein localises to the cytoplasm. Its function is as follows. Exhibits a very high intrinsic GTPase hydrolysis rate. Involved in the addition of a carboxymethylaminomethyl (cmnm) group at the wobble position (U34) of certain tRNAs, forming tRNA-cmnm(5)s(2)U34. The protein is tRNA modification GTPase MnmE of Thiobacillus denitrificans (strain ATCC 25259 / T1).